Consider the following 383-residue polypeptide: Glycoprotein gp2 (383 aa).

An N-terminal signal peptide occupies residues 1–25 (MGFIYARKLLLCMAVSIYAIGSTTT). Positions 24-75 (TTTETTTSSSSTSGSGQSTSSGTTNSSSSPTTSPPTTSSSPPTSTHTSSPST) are enriched in low complexity. A disordered region spans residues 24-136 (TTTETTTSSS…RNNSIEIVPQ (113 aa)). N-linked (GlcNAc...) asparagine; by host glycosylation occurs at N48. Positions 81–91 (HAGHHRGRAGG) are enriched in basic residues. N128 carries N-linked (GlcNAc...) asparagine; by host glycosylation. The chain crosses the membrane as a helical span at residues 354–371 (LVAATTLTVTILCLLCCL).

It localises to the virion membrane. The glycoprotein gp2 from the avirulent strain Kentucky A (KyA) is probably non functional since this strain harbors an in-frame deletion of 1,242 nucleotides in gene 71. This is Glycoprotein gp2 (US4) from Equus caballus (Horse).